The chain runs to 213 residues: Adenylate kinase (213 aa).

10-15 is an ATP binding site; that stretch reads GAGKGT. The NMP stretch occupies residues 30–59; sequence STGDMFRAAMANQTEMGVLAKSYIDKGDLV. AMP contacts are provided by residues threonine 31, arginine 36, 57-59, 86-89, and glutamine 93; these read DLV and GYPR. Positions 127 to 160 are LID; that stretch reads GRIINKKTGETFHKIFNPPVGDYKEEDFYQREDD. ATP contacts are provided by residues arginine 128 and 137-138; that span reads TF. Residues arginine 157 and arginine 168 each coordinate AMP. Lysine 196 lines the ATP pocket.

Belongs to the adenylate kinase family. As to quaternary structure, monomer.

The protein localises to the cytoplasm. It catalyses the reaction AMP + ATP = 2 ADP. The protein operates within purine metabolism; AMP biosynthesis via salvage pathway; AMP from ADP: step 1/1. Functionally, catalyzes the reversible transfer of the terminal phosphate group between ATP and AMP. Plays an important role in cellular energy homeostasis and in adenine nucleotide metabolism. The chain is Adenylate kinase from Streptococcus equi subsp. equi (strain 4047).